Consider the following 568-residue polypeptide: Probable WRKY transcription factor 34 (568 aa).

Positions 172 to 236 form a DNA-binding region, WRKY 1; it reads ACCAPADDGY…YTGDHIHSKP (65 aa). Zn(2+) contacts are provided by C203, C208, H231, and H233. Disordered regions lie at residues 230–252 and 337–360; these read DHIH…TGQD and KRRK…EPRV. Residues 366–431 constitute a DNA-binding region (WRKY 2); it reads SDIDILDDGY…YIGKHTHVVP (66 aa). Residues C397, C402, H426, and H428 each contribute to the Zn(2+) site.

It belongs to the WRKY group I family.

The protein localises to the nucleus. Transcription factor. Interacts specifically with the W box (5'-(T)TGAC[CT]-3'), a frequently occurring elicitor-responsive cis-acting element. The sequence is that of Probable WRKY transcription factor 34 (WRKY34) from Arabidopsis thaliana (Mouse-ear cress).